Reading from the N-terminus, the 552-residue chain is Dihydroxy-acid dehydratase (552 aa).

Residue D78 coordinates Mg(2+). Residue C119 participates in [2Fe-2S] cluster binding. 2 residues coordinate Mg(2+): D120 and K121. K121 is subject to N6-carboxylysine. C191 serves as a coordination point for [2Fe-2S] cluster. E442 is a binding site for Mg(2+). Residue S468 is the Proton acceptor of the active site.

It belongs to the IlvD/Edd family. As to quaternary structure, homodimer. It depends on [2Fe-2S] cluster as a cofactor. Mg(2+) serves as cofactor.

The enzyme catalyses (2R)-2,3-dihydroxy-3-methylbutanoate = 3-methyl-2-oxobutanoate + H2O. It catalyses the reaction (2R,3R)-2,3-dihydroxy-3-methylpentanoate = (S)-3-methyl-2-oxopentanoate + H2O. It functions in the pathway amino-acid biosynthesis; L-isoleucine biosynthesis; L-isoleucine from 2-oxobutanoate: step 3/4. It participates in amino-acid biosynthesis; L-valine biosynthesis; L-valine from pyruvate: step 3/4. In terms of biological role, functions in the biosynthesis of branched-chain amino acids. Catalyzes the dehydration of (2R,3R)-2,3-dihydroxy-3-methylpentanoate (2,3-dihydroxy-3-methylvalerate) into 2-oxo-3-methylpentanoate (2-oxo-3-methylvalerate) and of (2R)-2,3-dihydroxy-3-methylbutanoate (2,3-dihydroxyisovalerate) into 2-oxo-3-methylbutanoate (2-oxoisovalerate), the penultimate precursor to L-isoleucine and L-valine, respectively. The sequence is that of Dihydroxy-acid dehydratase from Moorella thermoacetica (strain ATCC 39073 / JCM 9320).